The chain runs to 428 residues: MAGEFRLLSHLCSRGSKVGELAQDTRTSLKTSWYLLGPAFVAAIAYVDPGNVAANVSSGAQFGYLLLWVIVAANVMAALVQYLSAKLGLVTGRSLPEAIGKRMGRPARLAYWAQAEIVAMATDVAEVIGGAIALRIMFNLPLPIGGIITGVVSLLLLTIQDRRGQRLFERVITALLLVIAIGFTASFFVVTPPPNAVLGGLAPRFQGTESVLLAAAIMGATVMPHAVYLHSGLARDRHGHPDPGPQRRRLLRVTRWDVGLAMLIAGGVNAAMLLVAALNMRGRGDTASIEGAYHAVHDTLGATIAVLFAVGLLASGLASSSVGAYAGAMIMQGLLHWSVPMLVRRLITLGPALAILTLGFDPTRTLVLSQVVLSFGIPFAVLPLVKLTGSPAVMGGDTNHRATTWVGWVVAVMVSLLNVMLIYLTVTG.

11 helical membrane-spanning segments follow: residues 33–53 (WYLLGPAFVAAIAYVDPGNVA), 60–80 (AQFGYLLLWVIVAANVMAALV), 114–134 (QAEIVAMATDVAEVIGGAIAL), 136–156 (IMFNLPLPIGGIITGVVSLLL), 171–191 (VITALLLVIAIGFTASFFVVT), 210–230 (SVLLAAAIMGATVMPHAVYLH), 258–278 (VGLAMLIAGGVNAAMLLVAAL), 299–319 (TLGATIAVLFAVGLLASGLAS), 334–356 (LLHWSVPMLVRRLITLGPALAIL), 365–385 (TLVLSQVVLSFGIPFAVLPLV), and 406–426 (VGWVVAVMVSLLNVMLIYLTV).

The protein belongs to the NRAMP family.

The protein localises to the cell membrane. Its function is as follows. H(+)-stimulated, divalent metal cation uptake system. Transports zinc and iron. Can also interact with manganese and copper. This Mycobacterium tuberculosis (strain CDC 1551 / Oshkosh) protein is Divalent metal cation transporter MntH.